The following is a 38-amino-acid chain: Large ribosomal subunit protein bL36 (38 aa).

This sequence belongs to the bacterial ribosomal protein bL36 family.

The polypeptide is Large ribosomal subunit protein bL36 (Prochlorococcus marinus (strain SARG / CCMP1375 / SS120)).